Here is a 252-residue protein sequence, read N- to C-terminus: RNA-binding protein 2 (252 aa).

Disordered stretches follow at residues 1-34 (MADGFWNRQQQHLPPPGGMLKRPRTEYDTAPSGV) and 232-252 (RLQFSRSPGRRSGGPGPRGKR). Residues 152–238 (STLYVEGLPS…SYLRLQFSRS (87 aa)) enclose the RRM domain. Over residues 242–252 (RSGGPGPRGKR) the composition is skewed to gly residues.

Its function is as follows. Probable RNA-binding protein. The polypeptide is RNA-binding protein 2 (Medicago truncatula (Barrel medic)).